The chain runs to 250 residues: Low affinity immunoglobulin gamma Fc region receptor III-A (250 aa).

A signal peptide spans 1–16 (MWQLLPPAALLLLVSA). At 17 to 208 (DTQTADPSKA…VSSFFLPWHQ (192 aa)) the chain is on the extracellular side. 2 consecutive Ig-like C2-type domains span residues 23–105 (PSKA…LEVH) and 99–189 (PVKL…VQIT). Cystine bridges form between Cys-47-Cys-89 and Cys-128-Cys-172. 2 N-linked (GlcNAc...) asparagine glycosylation sites follow: Asn-56 and Asn-63. The N-linked (GlcNAc...) asparagine glycan is linked to Asn-180. Residues 209–225 (ITFCLVMGVLFAVDTGL) traverse the membrane as a helical segment. Residues 226 to 250 (YFSVRRHLQSSEEWRDGKVTWSKGP) lie on the Cytoplasmic side of the membrane.

In terms of assembly, forms a heterooligomeric complex with ITAM-containing signaling subunits FCER1G. Interacts (via transmembrane domain) with signaling subunits; this interaction is a prerequisite for receptor complex expression on the cell surface and intracellular signal transduction. Binds the Fc region of antigen-complexed IgG. In terms of tissue distribution, expressed in gamma-delta T cells.

It localises to the cell membrane. Functionally, receptor for the invariable Fc fragment of immunoglobulin gamma (IgG). Optimally activated upon binding of clustered antigen-IgG complexes displayed on cell surfaces, triggers lysis of antibody-coated cells, a process known as antibody-dependent cellular cytotoxicity (ADCC). Does not bind free monomeric IgG, thus avoiding inappropriate effector cell activation in the absence of antigenic trigger. Mediates IgG effector functions on natural killer (NK) cells. Binds antigen-IgG complexes generated upon infection and triggers NK cell-dependent cytokine production and degranulation to limit viral load and propagation. Fc-binding subunit that associates with FCER1G adapters to form functional signaling complexes. Following the engagement of antigen-IgG complexes, triggers phosphorylation of immunoreceptor tyrosine-based activation motif (ITAM)-containing adapter with subsequent activation of phosphatidylinositol 3-kinase signaling and sustained elevation of intracellular calcium that ultimately drive NK cell activation. Mediates enhanced ADCC in response to afucosylated IgGs. In Bos taurus (Bovine), this protein is Low affinity immunoglobulin gamma Fc region receptor III-A.